The sequence spans 264 residues: Thymidylate synthase (264 aa).

Arginine 21 contacts dUMP. Histidine 51 serves as a coordination point for (6R)-5,10-methylene-5,6,7,8-tetrahydrofolate. Arginine 126–arginine 127 lines the dUMP pocket. Cysteine 146 acts as the Nucleophile in catalysis. DUMP is bound by residues arginine 166–aspartate 169, asparagine 177, and histidine 207–tyrosine 209. Aspartate 169 is a binding site for (6R)-5,10-methylene-5,6,7,8-tetrahydrofolate. Alanine 263 lines the (6R)-5,10-methylene-5,6,7,8-tetrahydrofolate pocket.

This sequence belongs to the thymidylate synthase family. Bacterial-type ThyA subfamily. Homodimer.

Its subcellular location is the cytoplasm. The catalysed reaction is dUMP + (6R)-5,10-methylene-5,6,7,8-tetrahydrofolate = 7,8-dihydrofolate + dTMP. It participates in pyrimidine metabolism; dTTP biosynthesis. In terms of biological role, catalyzes the reductive methylation of 2'-deoxyuridine-5'-monophosphate (dUMP) to 2'-deoxythymidine-5'-monophosphate (dTMP) while utilizing 5,10-methylenetetrahydrofolate (mTHF) as the methyl donor and reductant in the reaction, yielding dihydrofolate (DHF) as a by-product. This enzymatic reaction provides an intracellular de novo source of dTMP, an essential precursor for DNA biosynthesis. This chain is Thymidylate synthase, found in Hyphomonas neptunium (strain ATCC 15444).